The primary structure comprises 317 residues: Melanocyte-stimulating hormone receptor (317 aa).

The Extracellular segment spans residues 1–37; it reads MPVQGSQRRLLGSLNSTPTATPHLGLAANQTGARCLE. A glycan (N-linked (GlcNAc...) asparagine) is linked at Asn-29. The chain crosses the membrane as a helical span at residues 38–63; sequence VSVPDGLFLSLGLVSLVENVLVVTAI. At 64-72 the chain is on the cytoplasmic side; that stretch reads AKNRNLHSP. A helical transmembrane segment spans residues 73–93; that stretch reads MYCFICCLALSDLLVSGSNML. Residues 94–118 are Extracellular-facing; the sequence is ETAVTLLLEAGALAARAAVVQQLDN. Residues 119–140 form a helical membrane-spanning segment; that stretch reads VIDVITCSSMLSSLCFLGAIAV. Topologically, residues 141 to 163 are cytoplasmic; it reads DRYISIFYALRYHSIVTLPRARR. The helical transmembrane segment at 164 to 183 threads the bilayer; sequence AVAAIWVASVLFSTLFIAYY. The Extracellular portion of the chain corresponds to 184-191; sequence DHAAVLLC. The chain crosses the membrane as a helical span at residues 192 to 211; that stretch reads LVIFFLAMLVLMAVLYVHML. Residues 212–240 lie on the Cytoplasmic side of the membrane; that stretch reads ARACQHAQGIARLHKRQRLAHQGFGLKGA. The chain crosses the membrane as a helical span at residues 241-266; it reads ATLTILLGIFFLCWGPFFLHLTLIVL. Residues 267 to 279 are Extracellular-facing; sequence CPQHPTCSCIFKN. A helical membrane pass occupies residues 280-300; that stretch reads FNLFLALIICNAIIDPLIYAF. Residues 301-317 lie on the Cytoplasmic side of the membrane; it reads RSQELRRTLKEVLLCSW. A lipid anchor (S-palmitoyl cysteine) is attached at Cys-315.

This sequence belongs to the G-protein coupled receptor 1 family. Interacts with MGRN1, but does not undergo MGRN1-mediated ubiquitination; this interaction competes with GNAS-binding and thus inhibits agonist-induced cAMP production. Interacts with OPN3; the interaction results in a decrease in MC1R-mediated cAMP signaling and ultimately a decrease in melanin production in melanocytes.

The protein resides in the cell membrane. Receptor for MSH (alpha, beta and gamma) and ACTH. The activity of this receptor is mediated by G proteins which activate adenylate cyclase. Mediates melanogenesis, the production of eumelanin (black/brown) and phaeomelanin (red/yellow), via regulation of cAMP signaling in melanocytes. The chain is Melanocyte-stimulating hormone receptor (MC1R) from Papio hamadryas (Hamadryas baboon).